The following is a 225-amino-acid chain: Small ribosomal subunit protein uS3 (225 aa).

The KH type-2 domain occupies 38–106 (LRAFLRRKLS…DVALNIVEIR (69 aa)).

The protein belongs to the universal ribosomal protein uS3 family. As to quaternary structure, part of the 30S ribosomal subunit. Forms a tight complex with proteins S10 and S14.

Functionally, binds the lower part of the 30S subunit head. Binds mRNA in the 70S ribosome, positioning it for translation. This Gluconobacter oxydans (strain 621H) (Gluconobacter suboxydans) protein is Small ribosomal subunit protein uS3.